A 107-amino-acid polypeptide reads, in one-letter code: Bombesin (107 aa).

The signal sequence occupies residues 1–26; sequence MSAIPLNRILPLGFLLIFSFISLSSC. A propeptide spanning residues 27–41 is cleaved from the precursor; sequence MEFVEDPNNQGGLNL. Q42 bears the Pyrrolidone carboxylic acid mark. Position 55 is a methionine amide (M55). Residues 56-107 constitute a propeptide that is removed on maturation; that stretch reads GKKSLQDTDFEEMESFAKRNVENMKAESERELRHAQLVVRNILEQYLKNMQN.

Expressed by the skin glands.

Its subcellular location is the secreted. Its function is as follows. Stimulates smooth muscle contraction. Role in induction of hypothermia, stimulation of DNA replication and release of many gastrointestinal hormones. Possesses insulin-releasing activity. The protein is Bombesin of Bombina variegata (Yellow-bellied toad).